A 223-amino-acid polypeptide reads, in one-letter code: Phosphoribosylformylglycinamidine synthase subunit PurQ (223 aa).

Positions 4 to 223 (FAVIVFPGTN…FKSIVEWMKK (220 aa)) constitute a Glutamine amidotransferase type-1 domain. Cys-85 serves as the catalytic Nucleophile. Catalysis depends on residues His-196 and Glu-198.

Part of the FGAM synthase complex composed of 1 PurL, 1 PurQ and 2 PurS subunits.

The protein localises to the cytoplasm. The enzyme catalyses N(2)-formyl-N(1)-(5-phospho-beta-D-ribosyl)glycinamide + L-glutamine + ATP + H2O = 2-formamido-N(1)-(5-O-phospho-beta-D-ribosyl)acetamidine + L-glutamate + ADP + phosphate + H(+). It carries out the reaction L-glutamine + H2O = L-glutamate + NH4(+). Its pathway is purine metabolism; IMP biosynthesis via de novo pathway; 5-amino-1-(5-phospho-D-ribosyl)imidazole from N(2)-formyl-N(1)-(5-phospho-D-ribosyl)glycinamide: step 1/2. In terms of biological role, part of the phosphoribosylformylglycinamidine synthase complex involved in the purines biosynthetic pathway. Catalyzes the ATP-dependent conversion of formylglycinamide ribonucleotide (FGAR) and glutamine to yield formylglycinamidine ribonucleotide (FGAM) and glutamate. The FGAM synthase complex is composed of three subunits. PurQ produces an ammonia molecule by converting glutamine to glutamate. PurL transfers the ammonia molecule to FGAR to form FGAM in an ATP-dependent manner. PurS interacts with PurQ and PurL and is thought to assist in the transfer of the ammonia molecule from PurQ to PurL. The protein is Phosphoribosylformylglycinamidine synthase subunit PurQ of Pyrococcus horikoshii (strain ATCC 700860 / DSM 12428 / JCM 9974 / NBRC 100139 / OT-3).